Reading from the N-terminus, the 411-residue chain is Nuclear receptor subfamily 2 group F member 1-A (411 aa).

Residues 1-68 (MAMVVSVWRD…AGDKGSQNSG (68 aa)) are disordered. A compositionally biased stretch (low complexity) spans 24–46 (NPAAQPAREQQQAASAAPHTPQT). A DNA-binding region (nuclear receptor) is located at residues 73-148 (HIECVVCGDK…VGMRREAVQR (76 aa)). 2 consecutive NR C4-type zinc fingers follow at residues 76–96 (CVVC…CEGC) and 112–136 (CRAN…LKKC). The region spanning 174 to 400 (YLSGYISLLL…TLIRDMLLSG (227 aa)) is the NR LBD domain.

The protein belongs to the nuclear hormone receptor family. NR2 subfamily. As to expression, first expressed in 11-12 hour embryos. In the rostral brain of 13 hour embryos, expressed within the anterior half of the midbrain and the posterior part of the diencephalon. In the presumptive hindbrain, expressed in a segment-like stripe in the anterior region, resembling the presumptive rhombomere units of the hindbrain. Also detected in the intermediate mesoderm, posterior to the first somite. As somitogenesis proceeds, expression extends posteriorly and flanks the 10 most anterior somites. Expression changes extensively both in level and expansion of domains between 13 and 20 hours. In the rostral brain, expression extends to include a major part of the diencephalon and a caudal portion of the telencephalon. Within the hindbrain, strongly expressed in the two most anterior rhombomeres, and a lower but uniform expression is seen to extend throughout rhombomere 7. In 28 hour embryos, higher and more uniform expression is seen in both rostral and hindbrain areas. Also expressed in the retina of the eye.

Its subcellular location is the nucleus. Functionally, putative transcription factor that is required in photoreceptor cells precursors during eye development. The sequence is that of Nuclear receptor subfamily 2 group F member 1-A (nr2f1a) from Danio rerio (Zebrafish).